A 453-amino-acid chain; its full sequence is MSEKEIWEKVLKIAQEKLSAVSYSTFLKDTELYTIKDGEAIVLSSIPFNANWLNQQYAEIIQAILFDVVGYEVKPHFITTEELANYSNNETATPKETTKPSTETTEDNHVLGREQFNAHNTFDTFVIGPGNRFPHAASLAVAEAPAKAYNPLFIYGGVGLGKTHLMHAIGHHVLDNNPDAKVIYTSSEKFTNEFIKSIRDNEGEAFRERYRNIDVLLIDDIQFIQNKVQTQEEFFYTFNELHQNNKQIVISSDRPPKEIAQLEDRLRSRFEWGLIVDITPPDYETRMAILQKKIEEEKLDIPPEALNYIANQIQSNIRELEGALTRLLAYSQLLGKPITTELTAEALKDIIQAPKSKKITIQDIQKIVGQYYNVRIEDFSAKKRTKSIAYPRQIAMYLSRELTDFSLPKIGEEFGGRDHTTVIHAHEKISKDLKEDPIFKQEVENLEKEIRNV.

Positions 1-71 (MSEKEIWEKV…QAILFDVVGY (71 aa)) are domain I, interacts with DnaA modulators. The tract at residues 71–114 (YEVKPHFITTEELANYSNNETATPKETTKPSTETTEDNHVLGRE) is domain II. A domain III, AAA+ region region spans residues 115-331 (QFNAHNTFDT…GALTRLLAYS (217 aa)). Positions 159, 161, 162, and 163 each coordinate ATP. Residues 332-453 (QLLGKPITTE…ENLEKEIRNV (122 aa)) form a domain IV, binds dsDNA region.

It belongs to the DnaA family. In terms of assembly, oligomerizes as a right-handed, spiral filament on DNA at oriC.

It localises to the cytoplasm. Its function is as follows. Plays an essential role in the initiation and regulation of chromosomal replication. ATP-DnaA binds to the origin of replication (oriC) to initiate formation of the DNA replication initiation complex once per cell cycle. Binds the DnaA box (a 9 base pair repeat at the origin) and separates the double-stranded (ds)DNA. Forms a right-handed helical filament on oriC DNA; dsDNA binds to the exterior of the filament while single-stranded (ss)DNA is stabiized in the filament's interior. The ATP-DnaA-oriC complex binds and stabilizes one strand of the AT-rich DNA unwinding element (DUE), permitting loading of DNA polymerase. After initiation quickly degrades to an ADP-DnaA complex that is not apt for DNA replication. Binds acidic phospholipids. The chain is Chromosomal replication initiator protein DnaA from Staphylococcus aureus (strain bovine RF122 / ET3-1).